Consider the following 138-residue polypeptide: Glutaredoxin-like protein C5orf63 (138 aa).

Cysteine 41 and cysteine 44 are disulfide-bonded. The span at 55–64 shows a compositional bias: basic and acidic residues; that stretch reads ENRQPYKDQK. A disordered region spans residues 55 to 88; the sequence is ENRQPYKDQKLPGTRRRRSPSSPSHPHMASQSGK.

This sequence belongs to the glutaredoxin family. YDR286C subfamily.

The protein is Glutaredoxin-like protein C5orf63 (C5orf63) of Homo sapiens (Human).